Consider the following 1042-residue polypeptide: Diacylglycerol lipase-alpha (1042 aa).

Residues 1–22 (MPGIVVFRRRWSVGSDDLVLPA) are Cytoplasmic-facing. Residues 23-43 (IFLFLLHTTWFVILSVVLFGL) form a helical membrane-spanning segment. The Extracellular segment spans residues 44-60 (VYNPHEACSLNLVDHGR). The chain crosses the membrane as a helical span at residues 61 to 81 (GYLGILLSCMIAEMAIIWLSM). The Cytoplasmic segment spans residues 82–101 (RGGILYTEPRDSMQYVLYVR). A helical membrane pass occupies residues 102–122 (LAILVIEFIYAIVGIVWLTQY). At 123 to 136 (YTSCNDLTAKNVTL) the chain is on the extracellular side. The N-linked (GlcNAc...) asparagine glycan is linked to Asn133. Residues 137-157 (GMVVCNWVVILSVCITVLCVF) form a helical membrane-spanning segment. Residues 158–1042 (DPTGRTFVKL…KQDELVISAR (885 aa)) are Cytoplasmic-facing. Active-site charge relay system residues include Ser472 and Asp524. Phosphoserine is present on residues Ser727, Ser729, Ser732, Ser743, Ser782, Ser784, Ser806, Ser808, Ser833, Ser847, and Ser952. The disordered stretch occupies residues 846-903 (LSKHSQDTQPLEAALGSGGVTPERPPSAAANDEEEEVGGGGGGPASRGELALHNGRLG). Positions 1014–1042 (LAADKIRTSTPTGHGASPAKQDELVISAR) are disordered. At Thr1023 the chain carries Phosphothreonine.

Belongs to the AB hydrolase superfamily. Lipase family. As to quaternary structure, interacts (via C-terminal) with CAMK2A; leading to the phosphorylation and inhibition of DAGLA enzymatic activity. Interacts (via PPXXF motif) with HOMER1 and HOMER2; this interaction is required for DAGLA membrane localization. Requires Ca(2+) as cofactor. In terms of processing, phosphorylated at Ser-782 and Ser-808 by CAMK2A; phosphorylation by CAMK2A inhibits diacylglycerol lipase activity. Highly expressed in brain and pancreas.

It is found in the cell membrane. The protein localises to the postsynaptic density membrane. Its subcellular location is the early endosome membrane. It localises to the cell projection. The protein resides in the dendritic spine membrane. It carries out the reaction a 1,2-diacyl-sn-glycerol + H2O = a 2-acylglycerol + a fatty acid + H(+). It catalyses the reaction 1-octadecanoyl-2-(5Z,8Z,11Z,14Z-eicosatetraenoyl)-sn-glycerol + H2O = 2-(5Z,8Z,11Z,14Z-eicosatetraenoyl)-glycerol + octadecanoate + H(+). The enzyme catalyses 1,2-di-(9Z-octadecenoyl)-sn-glycerol + H2O = 2-(9Z-octadecenoyl)-glycerol + (9Z)-octadecenoate + H(+). The catalysed reaction is 1-(9Z-octadecenoyl)-2-(5Z,8Z,11Z,14Z-eicosatetraenoyl)-sn-glycerol + H2O = 2-(5Z,8Z,11Z,14Z-eicosatetraenoyl)-glycerol + (9Z)-octadecenoate + H(+). It carries out the reaction 1-(9Z-octadecenoyl)-2-octadecanoyl-sn-glycerol + H2O = 2-octadecanoylglycerol + (9Z)-octadecenoate + H(+). It catalyses the reaction 1-(9Z-octadecenoyl)-2-(9Z,12Z-octadecadienoyl)-sn-glycerol + H2O = 2-(9Z,12Z-octadecadienoyl)-glycerol + (9Z)-octadecenoate + H(+). The enzyme catalyses 1-(9Z-octadecenoyl)-2-O-(5Z,8Z,11Z,14Z-eicosatetraenyl)-sn-glycerol + H2O = 2-O-(5Z,8Z,11Z,14Z)-eicosatetraenylglycerol + (9Z)-octadecenoate + H(+). Its activity is regulated as follows. Inhibited by 1,2,3-triazole urea covalent inhibitors KT172, DH376 and DO34. Inhibited by p-hydroxy-mercuri-benzoate and HgCl(2), but not to PMSF. Also inhibited by RHC80267. Diacylglycerol lipase activity is inhibited by the phosphorylation of Ser-782 and Ser-808 by CAMK2A. Functionally, serine hydrolase that hydrolyzes arachidonic acid-esterified diacylglycerols (DAGs) to produce the principal endocannabinoid, 2-arachidonoylglycerol (2-AG). Preferentially hydrolyzes sn-1 fatty acids from diacylglycerols (DAG) that contain arachidonic acid (AA) esterified at the sn-2 position to biosynthesize 2-AG. Has negligible activity against other lipids including monoacylglycerols and phospholipids. Plays a key role in regulating 2-AG signaling in the central nervous system (CNS). Regulates 2-AG involved in retrograde suppression at central synapses. Supports axonal growth during development and adult neurogenesis. Plays a role for eCB signaling in the physiological regulation of anxiety and depressive behaviors. Also regulates neuroinflammatory responses in the brain, in particular, LPS-induced microglial activation. The protein is Diacylglycerol lipase-alpha (DAGLA) of Homo sapiens (Human).